The primary structure comprises 325 residues: Tagatose 1,6-diphosphate aldolase 1 (325 aa).

The protein belongs to the aldolase LacD family.

It carries out the reaction D-tagatofuranose 1,6-bisphosphate = D-glyceraldehyde 3-phosphate + dihydroxyacetone phosphate. It functions in the pathway carbohydrate metabolism; D-tagatose 6-phosphate degradation; D-glyceraldehyde 3-phosphate and glycerone phosphate from D-tagatose 6-phosphate: step 2/2. The protein is Tagatose 1,6-diphosphate aldolase 1 (lacD1) of Enterococcus faecalis (strain ATCC 700802 / V583).